The primary structure comprises 443 residues: MATSRAALCAVAVVCVVLAAACAPARAIHVGTPAAALFEEFKRTYGRAYETLAEEQQRLANFERNLELMREHQARNPHAQFGITKFFDLSEAEFAARYLNGAAYFAAAKRHAAQHYRKARADLSAVPDAVDWREKGAVTPVKDQGACGSCWAFSAVGNIEGQWYLAGHELVSLSEQQLVSCDDMNDGCDGGLMLQAFDWLLQNTNGHLHTEDSYPYVSGNGYVPECSNSSELVVGAQIDGHVLIGSSEKAMAAWLAKNGPIAIALDASSFMSYKSGVLTACIGKQLNHGVLLVGYDMTGEVPYWVIKNSWGGDWGEQGYVRVVMGVNACLLSEYPVSAHVRESAAPGTSTSSETPAPRPVMVEQVICFDKNCTQGCRKTLIKANECHKNGGGGASMIKCSPQKVTMCTYSNEFCVGGGLCFETPDGKCAPYFLGSIMNTCHYT.

The N-terminal stretch at 1–27 is a signal peptide; sequence MATSRAALCAVAVVCVVLAAACAPARA. Positions 28–125 are cleaved as a propeptide — activation peptide; it reads IHVGTPAAAL…YRKARADLSA (98 aa). Intrachain disulfides connect Cys-147–Cys-188 and Cys-181–Cys-226. Residue Cys-150 is part of the active site. N-linked (GlcNAc...) asparagine glycosylation occurs at Asn-228. Cys-281 and Cys-329 are disulfide-bonded. Residues His-288 and Asn-308 contribute to the active site.

This sequence belongs to the peptidase C1 family.

The polypeptide is Cysteine proteinase B (LMCPB) (Leishmania mexicana).